A 446-amino-acid chain; its full sequence is UDP-N-acetylmuramoylalanine--D-glutamate ligase (446 aa).

115–121 (GTNGKTT) lines the ATP pocket.

It belongs to the MurCDEF family.

The protein localises to the cytoplasm. The enzyme catalyses UDP-N-acetyl-alpha-D-muramoyl-L-alanine + D-glutamate + ATP = UDP-N-acetyl-alpha-D-muramoyl-L-alanyl-D-glutamate + ADP + phosphate + H(+). Its pathway is cell wall biogenesis; peptidoglycan biosynthesis. Functionally, cell wall formation. Catalyzes the addition of glutamate to the nucleotide precursor UDP-N-acetylmuramoyl-L-alanine (UMA). The polypeptide is UDP-N-acetylmuramoylalanine--D-glutamate ligase (Pelobacter propionicus (strain DSM 2379 / NBRC 103807 / OttBd1)).